Here is a 370-residue protein sequence, read N- to C-terminus: GTPase Obg (370 aa).

The Obg domain occupies 1–159; that stretch reads MKFIDEARIE…RKLKLELKVL (159 aa). The interval 129–148 is disordered; the sequence is HFKSSTNRAPRQKTNGKSGE. Residues 130–145 show a composition bias toward polar residues; sequence FKSSTNRAPRQKTNGK. Positions 160 to 334 constitute an OBG-type G domain; it reads ADVGLLGMPN…LCYSLQDYLD (175 aa). Residues 166–173, 191–195, 213–216, 284–287, and 315–317 contribute to the GTP site; these read GMPNAGKS, FTTLH, DIPG, NKVD, and SAL. The Mg(2+) site is built by serine 173 and threonine 193.

It belongs to the TRAFAC class OBG-HflX-like GTPase superfamily. OBG GTPase family. Monomer. Requires Mg(2+) as cofactor.

It localises to the cytoplasm. In terms of biological role, an essential GTPase which binds GTP, GDP and possibly (p)ppGpp with moderate affinity, with high nucleotide exchange rates and a fairly low GTP hydrolysis rate. Plays a role in control of the cell cycle, stress response, ribosome biogenesis and in those bacteria that undergo differentiation, in morphogenesis control. The chain is GTPase Obg from Polynucleobacter necessarius subsp. necessarius (strain STIR1).